The primary structure comprises 159 residues: Large ribosomal subunit protein uL11 (159 aa).

The protein belongs to the universal ribosomal protein uL11 family. Part of the ribosomal stalk of the 50S ribosomal subunit. Interacts with L10 and the large rRNA to form the base of the stalk. L10 forms an elongated spine to which L12 dimers bind in a sequential fashion forming a multimeric L10(L12)X complex.

In terms of biological role, forms part of the ribosomal stalk which helps the ribosome interact with GTP-bound translation factors. The protein is Large ribosomal subunit protein uL11 of Methanothrix thermoacetophila (strain DSM 6194 / JCM 14653 / NBRC 101360 / PT) (Methanosaeta thermophila).